A 426-amino-acid polypeptide reads, in one-letter code: D-ribulose kinase (426 aa).

Substrate-binding positions include aspartate 8, 12–15, serine 72, and aspartate 221; that span reads SGAR. Residues serine 243, glycine 281, and 376 to 380 contribute to the ATP site; that span reads GGAKN.

This sequence belongs to the FGGY kinase family. It depends on a divalent metal cation as a cofactor.

The enzyme catalyses D-ribulose + ATP = D-ribulose 5-phosphate + ADP + H(+). Functionally, exhibits ATP hydrolysis without substrate. Phosphorylates D-ribulose. The sequence is that of D-ribulose kinase from Synechococcus elongatus (strain ATCC 33912 / PCC 7942 / FACHB-805) (Anacystis nidulans R2).